The chain runs to 194 residues: HTH-type nicotine-responsive transcriptional repressor HdnoR (194 aa).

Positions 6-66 (VDRRQQLIDA…AAAAELLQQL (61 aa)) constitute an HTH tetR-type domain. Positions 29–48 (SLRTIASEAKASLAAVHVCF) form a DNA-binding region, H-T-H motif.

Homodimer.

6-hydroxy-D-nicotine and 6-hydroxy-L-nicotine prevent HdnoR from binding to the IR1 DNA. Both 6-hydroxy-nicotine enantiomers prevent DNA-protein complex formation at micromolar concentrations, with the D-enantiomer being twice as potent as the L-enantiomer. A thousand-fold higher L-nicotine concentration is required to elicit a similar effect. Its function is as follows. Represses expression of the 6-hydroxy-D-nicotine oxidase (6-hdno). Acts by binding to a gene operator site consisting of two inverted repeats, IR1 (covering the 6-hdno promoter region) and IR2 (situated upstream from the 6-hdno promoter). Binding to one site may stimulate binding of the protein to the second site. The polypeptide is HTH-type nicotine-responsive transcriptional repressor HdnoR (Paenarthrobacter nicotinovorans (Arthrobacter nicotinovorans)).